The following is a 453-amino-acid chain: Bifunctional protein GlmU (453 aa).

A pyrophosphorylase region spans residues 1 to 227; sequence MTQDIVILAA…EAEVAGVNDR (227 aa). UDP-N-acetyl-alpha-D-glucosamine is bound by residues 8-11, lysine 22, glutamine 73, 78-79, 100-102, glycine 137, glutamate 152, asparagine 167, and asparagine 225; these read LAAG, GT, and YGD. Aspartate 102 lines the Mg(2+) pocket. Asparagine 225 is a Mg(2+) binding site. The tract at residues 228-248 is linker; sequence VQLAALERELQNQQAVSLMQN. Residues 249–453 form an N-acetyltransferase region; it reads GATLLDPSRI…KDNWPRPIKK (205 aa). Residues arginine 331 and lysine 349 each coordinate UDP-N-acetyl-alpha-D-glucosamine. Histidine 361 functions as the Proton acceptor in the catalytic mechanism. The UDP-N-acetyl-alpha-D-glucosamine site is built by tyrosine 364 and asparagine 375. Residues alanine 378, 384–385, serine 403, alanine 421, and arginine 438 contribute to the acetyl-CoA site; that span reads NY.

In the N-terminal section; belongs to the N-acetylglucosamine-1-phosphate uridyltransferase family. It in the C-terminal section; belongs to the transferase hexapeptide repeat family. As to quaternary structure, homotrimer. Mg(2+) is required as a cofactor.

The protein resides in the cytoplasm. It carries out the reaction alpha-D-glucosamine 1-phosphate + acetyl-CoA = N-acetyl-alpha-D-glucosamine 1-phosphate + CoA + H(+). The enzyme catalyses N-acetyl-alpha-D-glucosamine 1-phosphate + UTP + H(+) = UDP-N-acetyl-alpha-D-glucosamine + diphosphate. Its pathway is nucleotide-sugar biosynthesis; UDP-N-acetyl-alpha-D-glucosamine biosynthesis; N-acetyl-alpha-D-glucosamine 1-phosphate from alpha-D-glucosamine 6-phosphate (route II): step 2/2. It participates in nucleotide-sugar biosynthesis; UDP-N-acetyl-alpha-D-glucosamine biosynthesis; UDP-N-acetyl-alpha-D-glucosamine from N-acetyl-alpha-D-glucosamine 1-phosphate: step 1/1. The protein operates within bacterial outer membrane biogenesis; LPS lipid A biosynthesis. Its function is as follows. Catalyzes the last two sequential reactions in the de novo biosynthetic pathway for UDP-N-acetylglucosamine (UDP-GlcNAc). The C-terminal domain catalyzes the transfer of acetyl group from acetyl coenzyme A to glucosamine-1-phosphate (GlcN-1-P) to produce N-acetylglucosamine-1-phosphate (GlcNAc-1-P), which is converted into UDP-GlcNAc by the transfer of uridine 5-monophosphate (from uridine 5-triphosphate), a reaction catalyzed by the N-terminal domain. In Marinomonas sp. (strain MWYL1), this protein is Bifunctional protein GlmU.